Here is a 213-residue protein sequence, read N- to C-terminus: GTP-binding protein yptV4 (213 aa).

13–21 is a GTP binding site; it reads GDTGVGKSC. The Effector region signature appears at 35-43; the sequence is HDLTIGVEF. GTP-binding positions include 61–65, 119–122, and 149–151; these read DTAGQ, NKCD, and SAR. The tract at residues 194–213 is disordered; sequence AGPQAAKPGEGDARKSSSCC. A compositionally biased stretch (basic and acidic residues) spans 202 to 213; the sequence is GEGDARKSSSCC. Residues C212 and C213 are each lipidated (S-geranylgeranyl cysteine).

Belongs to the small GTPase superfamily. Rab family.

The protein resides in the cell membrane. Functionally, protein transport. Probably involved in vesicular traffic. The protein is GTP-binding protein yptV4 (YPTV4) of Volvox carteri (Green alga).